Consider the following 273-residue polypeptide: Ribosomal RNA small subunit methyltransferase A (273 aa).

Positions 17, 19, 44, 65, and 111 each coordinate S-adenosyl-L-methionine.

It belongs to the class I-like SAM-binding methyltransferase superfamily. rRNA adenine N(6)-methyltransferase family. RsmA subfamily.

It localises to the cytoplasm. It catalyses the reaction adenosine(1518)/adenosine(1519) in 16S rRNA + 4 S-adenosyl-L-methionine = N(6)-dimethyladenosine(1518)/N(6)-dimethyladenosine(1519) in 16S rRNA + 4 S-adenosyl-L-homocysteine + 4 H(+). Specifically dimethylates two adjacent adenosines (A1518 and A1519) in the loop of a conserved hairpin near the 3'-end of 16S rRNA in the 30S particle. May play a critical role in biogenesis of 30S subunits. The protein is Ribosomal RNA small subunit methyltransferase A of Buchnera aphidicola subsp. Acyrthosiphon pisum (strain APS) (Acyrthosiphon pisum symbiotic bacterium).